The primary structure comprises 287 residues: ATP synthase gamma chain (287 aa).

It belongs to the ATPase gamma chain family. In terms of assembly, F-type ATPases have 2 components, CF(1) - the catalytic core - and CF(0) - the membrane proton channel. CF(1) has five subunits: alpha(3), beta(3), gamma(1), delta(1), epsilon(1). CF(0) has three main subunits: a, b and c.

The protein resides in the cell inner membrane. Its function is as follows. Produces ATP from ADP in the presence of a proton gradient across the membrane. The gamma chain is believed to be important in regulating ATPase activity and the flow of protons through the CF(0) complex. This is ATP synthase gamma chain from Xanthomonas campestris pv. campestris (strain B100).